Consider the following 111-residue polypeptide: Universal stress protein B (111 aa).

Helical transmembrane passes span 1-21 (MISTVSLFWALCVVCVINMAR) and 90-110 (FILTSALCGLVAIGLIGLAIW).

Belongs to the universal stress protein B family.

The protein localises to the cell inner membrane. The polypeptide is Universal stress protein B (Erwinia tasmaniensis (strain DSM 17950 / CFBP 7177 / CIP 109463 / NCPPB 4357 / Et1/99)).